Consider the following 437-residue polypeptide: Glutamate-1-semialdehyde 2,1-aminomutase (437 aa).

Lys-272 carries the N6-(pyridoxal phosphate)lysine modification.

Belongs to the class-III pyridoxal-phosphate-dependent aminotransferase family. HemL subfamily. Homodimer. Pyridoxal 5'-phosphate serves as cofactor.

It is found in the cytoplasm. The catalysed reaction is (S)-4-amino-5-oxopentanoate = 5-aminolevulinate. It participates in porphyrin-containing compound metabolism; protoporphyrin-IX biosynthesis; 5-aminolevulinate from L-glutamyl-tRNA(Glu): step 2/2. This chain is Glutamate-1-semialdehyde 2,1-aminomutase, found in Moorella thermoacetica (strain ATCC 39073 / JCM 9320).